We begin with the raw amino-acid sequence, 220 residues long: Germin-like protein subfamily 2 member 4 (220 aa).

Residues 1–21 form the signal peptide; the sequence is MDSRCFGFFFTLLSLNVIVLA. Cysteines 31 and 46 form a disulfide. Asn-51 and Asn-69 each carry an N-linked (GlcNAc...) asparagine glycan. In terms of domain architecture, Cupin type-1 spans 58 to 209; the sequence is FFAGIGKPAV…TFQIGTKEIE (152 aa). Positions 108, 110, 115, and 154 each coordinate Mn(2+).

Belongs to the germin family. Oligomer (believed to be a pentamer but probably hexamer).

Its subcellular location is the secreted. The protein localises to the extracellular space. It is found in the apoplast. In terms of biological role, may play a role in plant defense. Probably has no oxalate oxidase activity even if the active site is conserved. The protein is Germin-like protein subfamily 2 member 4 (GLP10) of Arabidopsis thaliana (Mouse-ear cress).